The following is a 369-amino-acid chain: Queuine tRNA-ribosyltransferase (369 aa).

The Proton acceptor role is filled by aspartate 90. Substrate is bound by residues 90 to 94 (DSGGF), aspartate 144, glutamine 186, and glycine 213. The RNA binding stretch occupies residues 244-250 (GVGKPAD). Catalysis depends on aspartate 263, which acts as the Nucleophile. The Zn(2+) site is built by cysteine 301, cysteine 303, cysteine 306, and histidine 332.

It belongs to the queuine tRNA-ribosyltransferase family. Homodimer. Within each dimer, one monomer is responsible for RNA recognition and catalysis, while the other monomer binds to the replacement base PreQ1. Requires Zn(2+) as cofactor.

The enzyme catalyses 7-aminomethyl-7-carbaguanine + guanosine(34) in tRNA = 7-aminomethyl-7-carbaguanosine(34) in tRNA + guanine. The protein operates within tRNA modification; tRNA-queuosine biosynthesis. Functionally, catalyzes the base-exchange of a guanine (G) residue with the queuine precursor 7-aminomethyl-7-deazaguanine (PreQ1) at position 34 (anticodon wobble position) in tRNAs with GU(N) anticodons (tRNA-Asp, -Asn, -His and -Tyr). Catalysis occurs through a double-displacement mechanism. The nucleophile active site attacks the C1' of nucleotide 34 to detach the guanine base from the RNA, forming a covalent enzyme-RNA intermediate. The proton acceptor active site deprotonates the incoming PreQ1, allowing a nucleophilic attack on the C1' of the ribose to form the product. After dissociation, two additional enzymatic reactions on the tRNA convert PreQ1 to queuine (Q), resulting in the hypermodified nucleoside queuosine (7-(((4,5-cis-dihydroxy-2-cyclopenten-1-yl)amino)methyl)-7-deazaguanosine). The chain is Queuine tRNA-ribosyltransferase from Dichelobacter nodosus (strain VCS1703A).